We begin with the raw amino-acid sequence, 326 residues long: UDP-3-O-acylglucosamine N-acyltransferase (326 aa).

Residue H225 is the Proton acceptor of the active site.

This sequence belongs to the transferase hexapeptide repeat family. LpxD subfamily. As to quaternary structure, homotrimer.

The enzyme catalyses a UDP-3-O-[(3R)-3-hydroxyacyl]-alpha-D-glucosamine + a (3R)-hydroxyacyl-[ACP] = a UDP-2-N,3-O-bis[(3R)-3-hydroxyacyl]-alpha-D-glucosamine + holo-[ACP] + H(+). It participates in bacterial outer membrane biogenesis; LPS lipid A biosynthesis. Catalyzes the N-acylation of UDP-3-O-acylglucosamine using 3-hydroxyacyl-ACP as the acyl donor. Is involved in the biosynthesis of lipid A, a phosphorylated glycolipid that anchors the lipopolysaccharide to the outer membrane of the cell. This is UDP-3-O-acylglucosamine N-acyltransferase from Acidovorax ebreus (strain TPSY) (Diaphorobacter sp. (strain TPSY)).